The chain runs to 667 residues: Protein-glutamine gamma-glutamyltransferase 4 (667 aa).

N-linked (GlcNAc...) asparagine glycosylation is found at Asn151, Asn220, and Asn227. Residues Cys256, His315, and Asp338 contribute to the active site. Positions 378 and 380 each coordinate Ca(2+). Residue Asn408 is glycosylated (N-linked (GlcNAc...) asparagine). Ca(2+)-binding residues include Glu430 and Glu435. Residues 430–449 (EGSPEERKAMEKASGKRPDD) are disordered. N-linked (GlcNAc...) asparagine glycans are attached at residues Asn472 and Asn488.

Belongs to the transglutaminase superfamily. Transglutaminase family. Homodimer. Ca(2+) serves as cofactor. In terms of processing, the N-terminus is blocked. Probably linked to the cell membrane via a lipid-anchor, possibly a GPI-anchor. Post-translationally, N-glycosylated on 2 Asn residues by a high mannose oligosaccharide consisting of five mannose residues and a fucosylated biantennary complex glycan. As to expression, expressed in the coagulating gland, the dorsal part of the prostate and in semen (at protein level). Expressed at low levels in the lateral prostate and seminal vesicle. Not expressed in the epididymis, kidney, liver, serum, sperm plug, testes and ventral prostate.

The protein resides in the secreted. It is found in the cell membrane. The enzyme catalyses L-glutaminyl-[protein] + L-lysyl-[protein] = [protein]-L-lysyl-N(6)-5-L-glutamyl-[protein] + NH4(+). In terms of biological role, associated with the mammalian reproductive process. Plays an important role in the formation of the seminal coagulum through the cross-linking of specific proteins present in the seminal plasma. Transglutaminase is also required to stabilize the copulatory plug. The chain is Protein-glutamine gamma-glutamyltransferase 4 (Tgm4) from Rattus norvegicus (Rat).